The sequence spans 331 residues: Anthranilate phosphoribosyltransferase (331 aa).

Residues G79, 82 to 83 (GD), T87, 89 to 92 (NIST), 107 to 115 (KHGNYGATS), and A119 each bind 5-phospho-alpha-D-ribose 1-diphosphate. G79 contributes to the anthranilate binding site. S91 is a Mg(2+) binding site. N110 contributes to the anthranilate binding site. Position 165 (R165) interacts with anthranilate. The Mg(2+) site is built by D223 and E224.

The protein belongs to the anthranilate phosphoribosyltransferase family. Homodimer. Requires Mg(2+) as cofactor.

The enzyme catalyses N-(5-phospho-beta-D-ribosyl)anthranilate + diphosphate = 5-phospho-alpha-D-ribose 1-diphosphate + anthranilate. It functions in the pathway amino-acid biosynthesis; L-tryptophan biosynthesis; L-tryptophan from chorismate: step 2/5. Its function is as follows. Catalyzes the transfer of the phosphoribosyl group of 5-phosphorylribose-1-pyrophosphate (PRPP) to anthranilate to yield N-(5'-phosphoribosyl)-anthranilate (PRA). The sequence is that of Anthranilate phosphoribosyltransferase from Bacteroides fragilis (strain ATCC 25285 / DSM 2151 / CCUG 4856 / JCM 11019 / LMG 10263 / NCTC 9343 / Onslow / VPI 2553 / EN-2).